Reading from the N-terminus, the 361-residue chain is Septin-1 (361 aa).

The Septin-type G domain occupies 32 to 304 (KGFEFTLMVV…ENYRSDRLAK (273 aa)). A G1 motif region spans residues 42–49 (GESGLGKS). GTP is bound by residues 42 to 49 (GESGLGKS), threonine 76, glycine 102, 181 to 189 (KADCLTKKE), glycine 239, and arginine 254. The tract at residues 99–102 (DTPG) is G3 motif. The interval 180–183 (AKAD) is G4 motif. The residue at position 319 (serine 319) is a Phosphoserine.

It belongs to the TRAFAC class TrmE-Era-EngA-EngB-Septin-like GTPase superfamily. Septin GTPase family. As to quaternary structure, likely part of a multicomponent septin complex that includes pnut. Interacts with pnut. Interacts with park. In terms of processing, ubiquitinated by park, leading to its degradation by the proteasome. As to expression, accumulates at the leading edge of the cleavage furrow in dividing cells and cellularizing embryos (at protein level). Also accumulates at the leading edge of the embryo epithelium during dorsal closure, in the embryonic neurons, and at the baso-lateral surfaces of ovarian follicle cells (at protein level).

It localises to the cytoplasm. Functionally, involved in cytokinesis. May be involved in p53-dependent apoptosis. This Drosophila melanogaster (Fruit fly) protein is Septin-1.